Reading from the N-terminus, the 690-residue chain is Eukaryotic translation initiation factor 3 subunit B (690 aa).

The segment covering 1 to 11 (MAKKKSEEHSG) has biased composition (basic and acidic residues). Residues 1–36 (MAKKKSEEHSGADANDSDYQEEPNFEDPPGFVDNIS) are disordered. Residues 15 to 25 (NDSDYQEEPNF) are compositionally biased toward acidic residues. Residues 57–141 (SVVVVDNIPK…HTFAVNLFTD (85 aa)) enclose the RRM domain. WD repeat units follow at residues 207–246 (TRER…KIQK), 293–331 (DGMS…LLDL), 334–369 (IKIP…TLME), 442–484 (EIRE…KPSL), and 530–575 (PDHF…IKRT). Residues 595-645 (EEKQKEIKKNLKKYYAAFEQKDRLRLTRASKELLEKRSQLRETFMEYRNKR) adopt a coiled-coil conformation.

This sequence belongs to the eIF-3 subunit B family. In terms of assembly, component of the eukaryotic translation initiation factor 3 (eIF-3) complex. The eIF-3 complex interacts with pix. Interacts with mxt.

It is found in the cytoplasm. Its function is as follows. RNA-binding component of the eukaryotic translation initiation factor 3 (eIF-3) complex, which is involved in protein synthesis of a specialized repertoire of mRNAs and, together with other initiation factors, stimulates binding of mRNA and methionyl-tRNAi to the 40S ribosome. The eIF-3 complex specifically targets and initiates translation of a subset of mRNAs involved in cell proliferation. The sequence is that of Eukaryotic translation initiation factor 3 subunit B from Drosophila yakuba (Fruit fly).